The primary structure comprises 864 residues: Sine oculis-binding protein homolog (864 aa).

Over residues 1-14 (MAEMEKEGRPPENK) the composition is skewed to basic and acidic residues. The disordered stretch occupies residues 1–25 (MAEMEKEGRPPENKRSRKPAHPVKR). 2 FCS-type zinc fingers span residues 142 to 180 (DEVS…KCFA) and 216 to 256 (FKNN…KCLN). Disordered regions lie at residues 304-360 (LTDA…ETPS), 413-484 (RGPP…PGAP), and 550-616 (KPPN…RGRG). 2 stretches are compositionally biased toward low complexity: residues 314 to 335 (PVAA…VSPS) and 417 to 433 (HHAS…MLPG). The segment covering 460–484 (IHPPSTPTMPGNPPGLLPPPPPGAP) has biased composition (pro residues). Low complexity-rich tracts occupy residues 565 to 582 (SAPG…GRSL) and 590 to 603 (GSSK…GSSG). The short motif at 618–622 (VVDLT) is the SUMO interaction motif 1 (SIM); mediates the binding to polysumoylated substrates element. Position 627 is a phosphoserine (Ser627). The SUMO interaction motif 2 (SIM); mediates the binding to polysumoylated substrates motif lies at 648-652 (VIDLT). Lys672 is covalently cross-linked (Glycyl lysine isopeptide (Lys-Gly) (interchain with G-Cter in SUMO2)). Residue Ser694 is modified to Phosphoserine. Residues 725–750 (APAEAKGAEPPPEQPPPPAPPKKLLS) are disordered. The span at 733-745 (EPPPEQPPPPAPP) shows a compositional bias: pro residues.

Belongs to the SOBP family. Interacts (via SIM domains) with SUMO1 and SUMO2.

Functionally, implicated in development of the cochlea. The sequence is that of Sine oculis-binding protein homolog from Rattus norvegicus (Rat).